A 326-amino-acid polypeptide reads, in one-letter code: ATP synthase subunit gamma, mitochondrial (326 aa).

Residues Met1–Ser45 constitute a mitochondrion transit peptide.

It belongs to the ATPase gamma chain family. As to quaternary structure, F-type ATPases have 2 components, CF(1) - the catalytic core - and CF(0) - the membrane proton channel. CF(1) has five subunits: alpha(3), beta(3), gamma(1), delta(1), epsilon(1). CF(0) has three main subunits: a, b and c.

It localises to the mitochondrion. The protein localises to the mitochondrion inner membrane. In terms of biological role, mitochondrial membrane ATP synthase (F(1)F(0) ATP synthase or Complex V) produces ATP from ADP in the presence of a proton gradient across the membrane which is generated by electron transport complexes of the respiratory chain. F-type ATPases consist of two structural domains, F(1) - containing the extramembraneous catalytic core, and F(0) - containing the membrane proton channel, linked together by a central stalk and a peripheral stalk. During catalysis, ATP synthesis in the catalytic domain of F(1) is coupled via a rotary mechanism of the central stalk subunits to proton translocation. Part of the complex F(1) domain and the central stalk which is part of the complex rotary element. The gamma subunit protrudes into the catalytic domain formed of alpha(3)beta(3). Rotation of the central stalk against the surrounding alpha(3)beta(3) subunits leads to hydrolysis of ATP in three separate catalytic sites on the beta subunits. This is ATP synthase subunit gamma, mitochondrial (ATPC) from Ipomoea batatas (Sweet potato).